Here is a 991-residue protein sequence, read N- to C-terminus: uncharacterized protein (991 aa).

The signal sequence occupies residues 1-17 (MLWPAALVAMFALAARA). Disordered stretches follow at residues 332–352 (DPLP…GETT), 392–425 (TTED…TTEG), 469–511 (EDST…EDTT), 542–569 (DTEA…TTPV), 587–641 (PAPT…NSLS), and 658–734 (ASSG…PPRI). Over residues 400–413 (TSTPTVTTVIDPTS) the composition is skewed to low complexity. The segment covering 414–425 (GAVTTESRTTEG) has biased composition (polar residues). The span at 472–493 (TTTARAAEYPTPTTTTVEPRPA) shows a compositional bias: low complexity. Polar residues predominate over residues 542–554 (DTEAAQSATSISD). Composition is skewed to low complexity over residues 556–569 (VTPE…TTPV) and 598–615 (ASTT…SHTP). Polar residues-rich tracts occupy residues 617–628 (PQESTSTPSRAP) and 658–667 (ASSGPGASTG). Residues 668-682 (ATTAPISPPWSASPA) show a composition bias toward low complexity. Polar residues predominate over residues 686 to 710 (VTTSAARTLEPSSTRKAVAAESTTA).

This is an uncharacterized protein from Psittacid herpesvirus 1 (isolate Amazon parrot/-/97-0001/1997) (PsHV-1).